Consider the following 503-residue polypeptide: Probable DNA ligase (503 aa).

An ATP-binding site is contributed by aspartate 212. The active-site N6-AMP-lysine intermediate is lysine 214. Residues arginine 219, arginine 234, glutamate 263, phenylalanine 296, arginine 368, and lysine 374 each contribute to the ATP site.

It belongs to the ATP-dependent DNA ligase family. Mg(2+) serves as cofactor.

The catalysed reaction is ATP + (deoxyribonucleotide)n-3'-hydroxyl + 5'-phospho-(deoxyribonucleotide)m = (deoxyribonucleotide)n+m + AMP + diphosphate.. DNA ligase that seals nicks in double-stranded DNA during DNA replication, DNA recombination and DNA repair. In Kineococcus radiotolerans (strain ATCC BAA-149 / DSM 14245 / SRS30216), this protein is Probable DNA ligase.